We begin with the raw amino-acid sequence, 490 residues long: Probable cytosol aminopeptidase (490 aa).

Positions 255 and 260 each coordinate Mn(2+). Residue lysine 267 is part of the active site. 3 residues coordinate Mn(2+): aspartate 278, aspartate 337, and glutamate 339. Arginine 341 is a catalytic residue.

It belongs to the peptidase M17 family. It depends on Mn(2+) as a cofactor.

The protein resides in the cytoplasm. The enzyme catalyses Release of an N-terminal amino acid, Xaa-|-Yaa-, in which Xaa is preferably Leu, but may be other amino acids including Pro although not Arg or Lys, and Yaa may be Pro. Amino acid amides and methyl esters are also readily hydrolyzed, but rates on arylamides are exceedingly low.. It carries out the reaction Release of an N-terminal amino acid, preferentially leucine, but not glutamic or aspartic acids.. Functionally, presumably involved in the processing and regular turnover of intracellular proteins. Catalyzes the removal of unsubstituted N-terminal amino acids from various peptides. This Gluconobacter oxydans (strain 621H) (Gluconobacter suboxydans) protein is Probable cytosol aminopeptidase.